A 216-amino-acid polypeptide reads, in one-letter code: Pyrrolidone-carboxylate peptidase (216 aa).

Residues E80, C143, and H168 contribute to the active site.

It belongs to the peptidase C15 family. As to quaternary structure, homotetramer.

The protein resides in the cytoplasm. It catalyses the reaction Release of an N-terminal pyroglutamyl group from a polypeptide, the second amino acid generally not being Pro.. Removes 5-oxoproline from various penultimate amino acid residues except L-proline. This chain is Pyrrolidone-carboxylate peptidase, found in Cupriavidus taiwanensis (strain DSM 17343 / BCRC 17206 / CCUG 44338 / CIP 107171 / LMG 19424 / R1) (Ralstonia taiwanensis (strain LMG 19424)).